A 217-amino-acid chain; its full sequence is U exon protein (217 aa).

Disordered regions lie at residues 79 to 113 (ISGEGNGQSGRGAARNHPRARTRCGATSPNHGGRV) and 171 to 217 (KEAP…WQRR). The segment covering 188–197 (RGQRGRKRRC) has biased composition (basic residues). Residues 202-217 (GGFQQPTGANQAWQRR) are compositionally biased toward polar residues.

This sequence belongs to the adenoviridae U exon protein family.

Its subcellular location is the host nucleus. It is found in the host nucleoplasm. It localises to the host nucleolus. In terms of biological role, might play a role in viral replication since it is associated with viral replication centers. Seems to have an effect on DBP localization. The polypeptide is U exon protein (Human adenovirus C serotype 5 (HAdV-5)).